The chain runs to 159 residues: Nucleoside diphosphate kinase (159 aa).

5 residues coordinate ATP: lysine 14, phenylalanine 62, arginine 90, threonine 96, and arginine 107. Histidine 123 serves as the catalytic Pros-phosphohistidine intermediate.

Belongs to the NDK family. Mg(2+) serves as cofactor.

The protein localises to the cytoplasm. It carries out the reaction a 2'-deoxyribonucleoside 5'-diphosphate + ATP = a 2'-deoxyribonucleoside 5'-triphosphate + ADP. The catalysed reaction is a ribonucleoside 5'-diphosphate + ATP = a ribonucleoside 5'-triphosphate + ADP. In terms of biological role, major role in the synthesis of nucleoside triphosphates other than ATP. The ATP gamma phosphate is transferred to the NDP beta phosphate via a ping-pong mechanism, using a phosphorylated active-site intermediate. This is Nucleoside diphosphate kinase from Pyrococcus abyssi (strain GE5 / Orsay).